A 720-amino-acid chain; its full sequence is Transcriptional regulator EFH1 (720 aa).

2 stretches are compositionally biased toward polar residues: residues 1 to 15 and 22 to 35; these read MNGIMTTSSHSNFYN and PSSSDHIPGPSSQD. Disordered regions lie at residues 1–111, 181–223, 245–336, and 365–437; these read MNGI…SSST, SFQM…HQSQ, QKEF…TIAT, and YQRQ…PQPD. Low complexity predominate over residues 71–105; it reads QQNQSESQQSRQSHHLQQQQQQQQQQQQNQHNQQN. Positions 181 to 200 are enriched in polar residues; sequence SFQMGSVSTPDTQNSSIRSK. The span at 201–223 shows a compositional bias: low complexity; the sequence is QQQQHSYQQQQPQQLSQSQHQSQ. The segment covering 254 to 266 has biased composition (polar residues); it reads GDQTLVPQTNSKL. A compositionally biased stretch (low complexity) spans 267-304; it reads QQQISETSYSQQQQQQQSPPTPQKQQQQQHYQHQTTQP. Residues 313–336 show a composition bias toward polar residues; it reads YSQTGGPSSSPVAGNISIPTTIAT. The span at 366–399 shows a compositional bias: low complexity; that stretch reads QRQQQQQQQHQQPQSQQMSQISQLSQQIPPQGSS. The span at 400 to 413 shows a compositional bias: polar residues; the sequence is KNISINSTPTKSRA. Low complexity predominate over residues 414-433; that stretch reads SSITTRSGRQSRSTSISSFI. An HTH APSES-type domain is found at 446-552; it reads KVATTRWDDE…KNIKQYFLTK (107 aa). The H-T-H motif DNA-binding region spans 480 to 501; sequence GTKLLNVIGMTRGKRDGILKTE. The segment covering 569-582 has biased composition (basic and acidic residues); the sequence is GMTRQREEVRREGR. The interval 569-662 is disordered; sequence GMTRQREEVR…KNSESKLLET (94 aa). Over residues 613–644 the composition is skewed to acidic residues; sequence VPGDDEEEEDDDDDDDDDEEEGEQDDEEEEDG. A compositionally biased stretch (low complexity) spans 645 to 654; that stretch reads SSTSMSSSKN.

The protein belongs to the EFG1/PHD1/stuA family.

The protein localises to the nucleus. In terms of biological role, transcription factor that regulates filamentous growth through repression of EFG1. Regulates the level of colonizing fungi, favoring commensalism as opposed to candidiasis. The protein is Transcriptional regulator EFH1 (EFH1) of Candida albicans (strain SC5314 / ATCC MYA-2876) (Yeast).